Here is a 453-residue protein sequence, read N- to C-terminus: Bifunctional protein GlmU (453 aa).

The segment at 1–231 (MERTCLAIIL…EVEMTGCNNR (231 aa)) is pyrophosphorylase. UDP-N-acetyl-alpha-D-glucosamine-binding positions include 10 to 13 (LAAG), K24, Q77, 82 to 83 (GT), 105 to 107 (YGD), G143, E157, N172, and N229. D107 serves as a coordination point for Mg(2+). N229 serves as a coordination point for Mg(2+). Residues 232–252 (AELAFIERLWQERRRHELMLS) form a linker region. The interval 253–453 (GVTMIAPETV…AIKAAKKGSH (201 aa)) is N-acetyltransferase. UDP-N-acetyl-alpha-D-glucosamine-binding residues include R318 and K336. H348 (proton acceptor) is an active-site residue. Residues Y351 and N362 each contribute to the UDP-N-acetyl-alpha-D-glucosamine site. Residues A365, 371 to 372 (NY), S390, S408, and R425 contribute to the acetyl-CoA site.

This sequence in the N-terminal section; belongs to the N-acetylglucosamine-1-phosphate uridyltransferase family. It in the C-terminal section; belongs to the transferase hexapeptide repeat family. As to quaternary structure, homotrimer. It depends on Mg(2+) as a cofactor.

The protein resides in the cytoplasm. The catalysed reaction is alpha-D-glucosamine 1-phosphate + acetyl-CoA = N-acetyl-alpha-D-glucosamine 1-phosphate + CoA + H(+). The enzyme catalyses N-acetyl-alpha-D-glucosamine 1-phosphate + UTP + H(+) = UDP-N-acetyl-alpha-D-glucosamine + diphosphate. Its pathway is nucleotide-sugar biosynthesis; UDP-N-acetyl-alpha-D-glucosamine biosynthesis; N-acetyl-alpha-D-glucosamine 1-phosphate from alpha-D-glucosamine 6-phosphate (route II): step 2/2. The protein operates within nucleotide-sugar biosynthesis; UDP-N-acetyl-alpha-D-glucosamine biosynthesis; UDP-N-acetyl-alpha-D-glucosamine from N-acetyl-alpha-D-glucosamine 1-phosphate: step 1/1. It participates in bacterial outer membrane biogenesis; LPS lipid A biosynthesis. Functionally, catalyzes the last two sequential reactions in the de novo biosynthetic pathway for UDP-N-acetylglucosamine (UDP-GlcNAc). The C-terminal domain catalyzes the transfer of acetyl group from acetyl coenzyme A to glucosamine-1-phosphate (GlcN-1-P) to produce N-acetylglucosamine-1-phosphate (GlcNAc-1-P), which is converted into UDP-GlcNAc by the transfer of uridine 5-monophosphate (from uridine 5-triphosphate), a reaction catalyzed by the N-terminal domain. The chain is Bifunctional protein GlmU from Rhizobium rhizogenes (strain K84 / ATCC BAA-868) (Agrobacterium radiobacter).